A 325-amino-acid chain; its full sequence is Phospholipid phosphatase-related protein type 1 (325 aa).

Asparagine 5 is a glycosylation site (N-linked (GlcNAc...) asparagine). 3 helical membrane-spanning segments follow: residues 13–33 (IIPC…LLAY), 67–87 (FISP…IIFI), and 127–147 (FIGV…AGQV). Residue asparagine 163 is glycosylated (N-linked (GlcNAc...) asparagine). 3 consecutive transmembrane segments (helical) span residues 201 to 218 (AALS…ITST), 230 to 247 (VLCL…LNRV), and 257 to 277 (VIAG…CVVH). Position 307 is a phosphoserine (serine 307). Asparagine 316 carries an N-linked (GlcNAc...) asparagine glycan.

This sequence belongs to the PA-phosphatase related phosphoesterase family.

The protein localises to the cell membrane. It is found in the cell projection. The protein resides in the neuron projection. Functionally, may play a role in neurite outgrowth and neurogenesis. In Mus musculus (Mouse), this protein is Phospholipid phosphatase-related protein type 1.